The sequence spans 321 residues: Type 3 secretion system translocon protein SctB (321 aa).

Residues 99–119 (AALIGGAISSVLGILGSFAAI) traverse the membrane as a helical segment.

It belongs to the SctB/EspB family. The core secretion machinery of the T3SS is composed of approximately 20 different proteins, including cytoplasmic components, a base, an export apparatus and a needle. This subunit is involved in the formation of a pore, called the translocon, in host membrane.

It localises to the secreted. Its subcellular location is the cell surface. It is found in the host membrane. In terms of biological role, component of the type III secretion system (T3SS), also called injectisome, which is used to inject bacterial effector proteins into eukaryotic host cells. EspD and EspB are inserted into the host membrane where they form a pore and allow the translocation of effector proteins into the cytosol of target cells. Necessary for intimate attachment to epithelial cells. In Escherichia coli O127:H6 (strain E2348/69 / EPEC), this protein is Type 3 secretion system translocon protein SctB.